Consider the following 849-residue polypeptide: Formin-like protein 4 (849 aa).

The signal sequence occupies residues 1–22; sequence MPPTLALLLFLALSAVAAVGGA. The interval 36-104 is disordered; that stretch reads IEWTPPPSTA…RARGGGGGGT (69 aa). Residues 38–52 show a composition bias toward pro residues; that stretch reads WTPPPSTASPSPPSP. The segment covering 53 to 64 has biased composition (low complexity); sequence DFSSDPSTPATP. Residues 109–129 traverse the membrane as a helical segment; it reads IVVASAAAAAVLALLAFAAAF. Residues 185-194 are compositionally biased toward basic and acidic residues; that stretch reads ARRGMCRDVD. Residues 185-364 are disordered; it reads ARRGMCRDVD…PEPPTGPVSA (180 aa). Residues 234 to 246 are compositionally biased toward gly residues; the sequence is GSGGGGGGEGGGT. The segment covering 247–279 has biased composition (low complexity); it reads WSEASASSPRTTTASRRSLPSLTSDFFPTTPAA. 3 stretches are compositionally biased toward pro residues: residues 280–297, 324–339, and 346–360; these read APVP…PPAP, PSNP…PPPS, and PKPP…PPTG. One can recognise an FH2 domain in the interval 406–823; sequence EAAGDEPRPK…SARSFRISAA (418 aa).

Belongs to the formin-like family. Class-I subfamily.

The protein resides in the membrane. This Oryza sativa subsp. japonica (Rice) protein is Formin-like protein 4 (FH4).